The following is a 418-amino-acid chain: Glutamyl-tRNA reductase (418 aa).

Residues 49–52 (TCNR), S109, 114–116 (EPQ), and Q120 contribute to the substrate site. C50 serves as the catalytic Nucleophile. Position 189–194 (189–194 (GAGETI)) interacts with NADP(+).

It belongs to the glutamyl-tRNA reductase family. Homodimer.

The catalysed reaction is (S)-4-amino-5-oxopentanoate + tRNA(Glu) + NADP(+) = L-glutamyl-tRNA(Glu) + NADPH + H(+). It participates in porphyrin-containing compound metabolism; protoporphyrin-IX biosynthesis; 5-aminolevulinate from L-glutamyl-tRNA(Glu): step 1/2. Functionally, catalyzes the NADPH-dependent reduction of glutamyl-tRNA(Glu) to glutamate 1-semialdehyde (GSA). The chain is Glutamyl-tRNA reductase from Escherichia coli O1:K1 / APEC.